The chain runs to 544 residues: Chaperonin GroEL (544 aa).

ATP is bound by residues 30–33 (TLGP), lysine 51, 87–91 (DGTTT), glycine 415, 479–481 (NAA), and aspartate 495.

Belongs to the chaperonin (HSP60) family. Forms a cylinder of 14 subunits composed of two heptameric rings stacked back-to-back. Interacts with the co-chaperonin GroES.

The protein resides in the cytoplasm. The enzyme catalyses ATP + H2O + a folded polypeptide = ADP + phosphate + an unfolded polypeptide.. Together with its co-chaperonin GroES, plays an essential role in assisting protein folding. The GroEL-GroES system forms a nano-cage that allows encapsulation of the non-native substrate proteins and provides a physical environment optimized to promote and accelerate protein folding. The sequence is that of Chaperonin GroEL from Francisella tularensis subsp. tularensis (strain WY96-3418).